The sequence spans 274 residues: Elongation factor Ts (274 aa).

The interval 76-79 (TDFV) is involved in Mg(2+) ion dislocation from EF-Tu.

Belongs to the EF-Ts family.

Its subcellular location is the cytoplasm. Associates with the EF-Tu.GDP complex and induces the exchange of GDP to GTP. It remains bound to the aminoacyl-tRNA.EF-Tu.GTP complex up to the GTP hydrolysis stage on the ribosome. The sequence is that of Elongation factor Ts from Mycobacterium sp. (strain JLS).